Consider the following 79-residue polypeptide: Omega-phylotoxin-To1a (79 aa).

An N-terminal signal peptide occupies residues 1-21; sequence MKKTFCFILILVCIVLKSVNA. Positions 22 to 38 are excised as a propeptide; that stretch reads EEEDNFEESSLEMETAR. Intrachain disulfides connect cysteine 39/cysteine 59, cysteine 46/cysteine 63, cysteine 58/cysteine 78, and cysteine 65/cysteine 76.

In terms of tissue distribution, expressed by the venom duct.

The protein resides in the secreted. Insect-specific toxin that probably acts as an inhibitor of presynaptic insect calcium channels, presumably Cav2 subtype. In vivo, induces immediate paralysis on insects, followed by death when high doses are injected. This Tibellus oblongus (Oblong running crab spider) protein is Omega-phylotoxin-To1a.